A 193-amino-acid chain; its full sequence is MADEAETLDAAHGATDAAHGAADAAHASSPGMPQLDFATFPNQIFWLVLTLLAIYFVLTKIALPRISSVIAERQGTLTNDLAAAEDLKRQAAEAEESYNTALANARAEASRIAQETRDEIQAQTQVEIDKADAQIAARTAEGEARIAEIEAGAIATAEEVARDVATEIVRAFGPGQDVDAAAVADAVANRVRG.

A helical transmembrane segment spans residues 44 to 64; it reads IFWLVLTLLAIYFVLTKIALP.

Belongs to the ATPase B chain family. In terms of assembly, F-type ATPases have 2 components, F(1) - the catalytic core - and F(0) - the membrane proton channel. F(1) has five subunits: alpha(3), beta(3), gamma(1), delta(1), epsilon(1). F(0) has three main subunits: a(1), b(2) and c(10-14). The alpha and beta chains form an alternating ring which encloses part of the gamma chain. F(1) is attached to F(0) by a central stalk formed by the gamma and epsilon chains, while a peripheral stalk is formed by the delta and b chains.

It is found in the cell inner membrane. F(1)F(0) ATP synthase produces ATP from ADP in the presence of a proton or sodium gradient. F-type ATPases consist of two structural domains, F(1) containing the extramembraneous catalytic core and F(0) containing the membrane proton channel, linked together by a central stalk and a peripheral stalk. During catalysis, ATP synthesis in the catalytic domain of F(1) is coupled via a rotary mechanism of the central stalk subunits to proton translocation. Its function is as follows. Component of the F(0) channel, it forms part of the peripheral stalk, linking F(1) to F(0). The b'-subunit is a diverged and duplicated form of b found in plants and photosynthetic bacteria. This is ATP synthase subunit b 2 (atpF2) from Jannaschia sp. (strain CCS1).